A 354-amino-acid chain; its full sequence is UDP-N-acetylglucosamine--N-acetylmuramyl-(pentapeptide) pyrophosphoryl-undecaprenol N-acetylglucosamine transferase (354 aa).

UDP-N-acetyl-alpha-D-glucosamine contacts are provided by residues 11–13, N117, R160, S186, and Q288; that span reads TGG.

It belongs to the glycosyltransferase 28 family. MurG subfamily.

It is found in the cell inner membrane. The catalysed reaction is di-trans,octa-cis-undecaprenyl diphospho-N-acetyl-alpha-D-muramoyl-L-alanyl-D-glutamyl-meso-2,6-diaminopimeloyl-D-alanyl-D-alanine + UDP-N-acetyl-alpha-D-glucosamine = di-trans,octa-cis-undecaprenyl diphospho-[N-acetyl-alpha-D-glucosaminyl-(1-&gt;4)]-N-acetyl-alpha-D-muramoyl-L-alanyl-D-glutamyl-meso-2,6-diaminopimeloyl-D-alanyl-D-alanine + UDP + H(+). The protein operates within cell wall biogenesis; peptidoglycan biosynthesis. Functionally, cell wall formation. Catalyzes the transfer of a GlcNAc subunit on undecaprenyl-pyrophosphoryl-MurNAc-pentapeptide (lipid intermediate I) to form undecaprenyl-pyrophosphoryl-MurNAc-(pentapeptide)GlcNAc (lipid intermediate II). In Rickettsia canadensis (strain McKiel), this protein is UDP-N-acetylglucosamine--N-acetylmuramyl-(pentapeptide) pyrophosphoryl-undecaprenol N-acetylglucosamine transferase.